A 20-amino-acid chain; its full sequence is Implantin (20 aa).

It belongs to the EF-1-beta/EF-1-delta family. In terms of processing, phosphorylated. In terms of tissue distribution, uterus and embryo.

Its subcellular location is the cytoplasm. The protein resides in the nucleus. Its function is as follows. Binds DNA. The chain is Implantin from Mus musculus (Mouse).